The chain runs to 396 residues: NADH-quinone oxidoreductase subunit D (396 aa).

It belongs to the complex I 49 kDa subunit family. In terms of assembly, NDH-1 is composed of 14 different subunits. Subunits NuoB, C, D, E, F, and G constitute the peripheral sector of the complex.

The protein resides in the cell inner membrane. It catalyses the reaction a quinone + NADH + 5 H(+)(in) = a quinol + NAD(+) + 4 H(+)(out). Functionally, NDH-1 shuttles electrons from NADH, via FMN and iron-sulfur (Fe-S) centers, to quinones in the respiratory chain. The immediate electron acceptor for the enzyme in this species is believed to be ubiquinone. Couples the redox reaction to proton translocation (for every two electrons transferred, four hydrogen ions are translocated across the cytoplasmic membrane), and thus conserves the redox energy in a proton gradient. The sequence is that of NADH-quinone oxidoreductase subunit D from Brucella abortus (strain S19).